The primary structure comprises 378 residues: Ribosomal RNA large subunit methyltransferase G (378 aa).

The protein belongs to the methyltransferase superfamily. RlmG family.

It localises to the cytoplasm. The catalysed reaction is guanosine(1835) in 23S rRNA + S-adenosyl-L-methionine = N(2)-methylguanosine(1835) in 23S rRNA + S-adenosyl-L-homocysteine + H(+). In terms of biological role, specifically methylates the guanine in position 1835 (m2G1835) of 23S rRNA. This is Ribosomal RNA large subunit methyltransferase G from Shigella flexneri.